The sequence spans 226 residues: B-cell antigen receptor complex-associated protein alpha chain (226 aa).

An N-terminal signal peptide occupies residues 1–32; the sequence is MPGGPGVLQALPATIFLLFLLSAVYLGPGCQA. The region spanning 33–116 is the Ig-like C2-type domain; sequence LWMHKVPASL…RVQEGNESYQ (84 aa). At 33–143 the chain is on the extracellular side; that stretch reads LWMHKVPASL…LDMGEGTKNR (111 aa). Cysteines 54 and 106 form a disulfide. Residues Asn-57, Asn-63, Asn-73, Asn-88, Asn-97, and Asn-112 are each glycosylated (N-linked (GlcNAc...) asparagine). A helical membrane pass occupies residues 144-165; it reads IITAEGIILLFCAVVPGTLLLF. Residues 166–226 are Cytoplasmic-facing; sequence RKRWQNEKLG…NIGDVQLEKP (61 aa). The ITAM domain maps to 177–205; sequence DAGDEYEDENLYEGLNLDDCSMYEDISRG. Tyr-188 and Tyr-199 each carry phosphotyrosine; by SRC-type Tyr-kinases. Residue Arg-204 is modified to Asymmetric dimethylarginine; by PRMT1. Tyr-210 is modified (phosphotyrosine; by Tyr-kinases).

Heterodimer of alpha and beta chains; disulfide-linked. Part of the B-cell antigen receptor complex where the alpha/beta chain heterodimer is non-covalently associated with an antigen-specific membrane-bound surface immunoglobulin of two heavy chains and two light chains. Interacts through its phosphorylated ITAM domain with the SH2 domains of SYK which stimulates SYK autophosphorylation and activation. Also interacts, when phosphorylated on Tyr-210, with the SH2 domain of BLNK/SLP65, bringing BLNK into proximity with SYK and allowing SYK to phosphorylate BLNK which is necessary for trafficking of the BCR to late endosomes. Interacts with Src-family tyrosine kinases including FYN and LYN, increasing their activity. In terms of processing, phosphorylated on tyrosine, serine and threonine residues upon B-cell activation. Phosphorylation of tyrosine residues by Src-family kinases is an early and essential feature of the BCR signaling cascade. The phosphorylated tyrosines serve as docking sites for SH2-domain containing kinases, leading to their activation which in turn leads to phosphorylation of downstream targets. Phosphorylated by LYN. Phosphorylation of serine and threonine residues may prevent subsequent tyrosine phosphorylation. Post-translationally, arginine methylation in the ITAM domain may interfere with the binding of SYK. It promotes signals leading to B-cell differentiation. In terms of tissue distribution, B-cells.

It is found in the cell membrane. Required in cooperation with CD79B for initiation of the signal transduction cascade activated by binding of antigen to the B-cell antigen receptor complex (BCR) which leads to internalization of the complex, trafficking to late endosomes and antigen presentation. Also required for BCR surface expression and for efficient differentiation of pro- and pre-B-cells. Stimulates SYK autophosphorylation and activation. Binds to BLNK, bringing BLNK into proximity with SYK and allowing SYK to phosphorylate BLNK. Also interacts with and increases activity of some Src-family tyrosine kinases. Represses BCR signaling during development of immature B-cells. The chain is B-cell antigen receptor complex-associated protein alpha chain (CD79A) from Homo sapiens (Human).